The sequence spans 273 residues: Octanoyltransferase LipM (273 aa).

One can recognise a BPL/LPL catalytic domain in the interval 33–244; sequence GKTPPTLRFY…AFTRLYAVEF (212 aa). Cys-146 acts as the Acyl-thioester intermediate in catalysis.

It belongs to the octanoyltransferase LipM family. In terms of assembly, monomer.

It catalyses the reaction octanoyl-[ACP] + L-lysyl-[protein] = N(6)-octanoyl-L-lysyl-[protein] + holo-[ACP] + H(+). Its pathway is protein modification; protein lipoylation via endogenous pathway; protein N(6)-(lipoyl)lysine from octanoyl-[acyl-carrier-protein]. In terms of biological role, catalyzes the transfer of endogenously produced octanoic acid from octanoyl-acyl-carrier-protein onto the lipoyl domain of GcvH, an intermediate carrier during protein lipoylation. The chain is Octanoyltransferase LipM from Moorella thermoacetica (strain ATCC 39073 / JCM 9320).